The following is a 110-amino-acid chain: Large ribosomal subunit protein bL20 (110 aa).

It belongs to the bacterial ribosomal protein bL20 family.

In terms of biological role, binds directly to 23S ribosomal RNA and is necessary for the in vitro assembly process of the 50S ribosomal subunit. It is not involved in the protein synthesizing functions of that subunit. This is Large ribosomal subunit protein bL20 from Shigella boydii serotype 4 (strain Sb227).